The sequence spans 417 residues: Ribonuclease T2-like (417 aa).

An N-terminal signal peptide occupies residues 1–22 (MSSISGFLGAIPGAQQILQTMA). 5 disulfides stabilise this stretch: Cys-45–Cys-63, Cys-52–Cys-99, Cys-62–Cys-165, Cys-107–Cys-157, and Cys-229–Cys-264. His-92 is an active-site residue. An N-linked (GlcNAc...) asparagine glycan is attached at Asn-115. Catalysis depends on residues Glu-150 and His-154. A disordered region spans residues 274-296 (KTPNKDPGHGHEPTKTRHPHGPT). Over residues 276 to 288 (PNKDPGHGHEPTK) the composition is skewed to basic and acidic residues. An N-linked (GlcNAc...) asparagine glycan is attached at Asn-383.

This sequence belongs to the RNase T2 family.

It is found in the vacuole lumen. The protein resides in the cytoplasm. The enzyme catalyses a ribonucleotidyl-ribonucleotide-RNA + H2O = a 3'-end 3'-phospho-ribonucleotide-RNA + a 5'-end dephospho-ribonucleoside-RNA + H(+). In terms of biological role, rnase which modulates cell survival under stress conditions. Released from the vacuole to the cytoplasm during stress to promote tRNA and rRNA cleavage and to activate separately a downstream pathway that promotes cell death. Involved in cell size, vacuolar morphology and growth at high temperatures and high salt concentration. This is Ribonuclease T2-like (rny1) from Emericella nidulans (strain FGSC A4 / ATCC 38163 / CBS 112.46 / NRRL 194 / M139) (Aspergillus nidulans).